Here is a 559-residue protein sequence, read N- to C-terminus: Urocanate hydratase (559 aa).

Residues 53–54 (GG), Q131, 177–179 (GMG), E197, R202, 243–244 (NA), 264–268 (QTSAH), 274–275 (YL), and Y323 contribute to the NAD(+) site. The active site involves C411. G493 is a binding site for NAD(+).

This sequence belongs to the urocanase family. NAD(+) serves as cofactor.

The protein resides in the cytoplasm. The enzyme catalyses 4-imidazolone-5-propanoate = trans-urocanate + H2O. Its pathway is amino-acid degradation; L-histidine degradation into L-glutamate; N-formimidoyl-L-glutamate from L-histidine: step 2/3. Catalyzes the conversion of urocanate to 4-imidazolone-5-propionate. The chain is Urocanate hydratase from Pseudomonas aeruginosa (strain LESB58).